Here is a 280-residue protein sequence, read N- to C-terminus: 4-deoxy-L-threo-5-hexosulose-uronate ketol-isomerase (280 aa).

Residues His198, His200, Glu205, and His247 each contribute to the Zn(2+) site.

The protein belongs to the KduI family. Zn(2+) is required as a cofactor.

It is found in the cytoplasm. It carries out the reaction 5-dehydro-4-deoxy-D-glucuronate = 3-deoxy-D-glycero-2,5-hexodiulosonate. Isomerase involved in ulvan degradation. Ulvan is the main polysaccharide component of the Ulvales (green seaweed) cell wall. It is composed of disaccharide building blocks comprising 3-sulfated rhamnose (Rha3S) linked to D-glucuronic acid (GlcA), L-iduronic acid (IduA), or D-xylose (Xyl). Catalyzes the isomerization of 5-dehydro-4-deoxy-D-glucuronate to 3-deoxy-D-glycero-2,5-hexodiulosonate. This Formosa agariphila (strain DSM 15362 / KCTC 12365 / LMG 23005 / KMM 3901 / M-2Alg 35-1) protein is 4-deoxy-L-threo-5-hexosulose-uronate ketol-isomerase.